The sequence spans 469 residues: 3-isopropylmalate dehydratase large subunit (469 aa).

Positions 350, 410, and 413 each coordinate [4Fe-4S] cluster.

The protein belongs to the aconitase/IPM isomerase family. LeuC type 1 subfamily. As to quaternary structure, heterodimer of LeuC and LeuD. Requires [4Fe-4S] cluster as cofactor.

It catalyses the reaction (2R,3S)-3-isopropylmalate = (2S)-2-isopropylmalate. Its pathway is amino-acid biosynthesis; L-leucine biosynthesis; L-leucine from 3-methyl-2-oxobutanoate: step 2/4. Its function is as follows. Catalyzes the isomerization between 2-isopropylmalate and 3-isopropylmalate, via the formation of 2-isopropylmaleate. The sequence is that of 3-isopropylmalate dehydratase large subunit from Chelativorans sp. (strain BNC1).